Here is a 736-residue protein sequence, read N- to C-terminus: Phosphoribosylformylglycinamidine synthase subunit PurL (736 aa).

His-49 is a catalytic residue. The ATP site is built by Tyr-52 and Lys-91. Residue Glu-93 coordinates Mg(2+). Substrate is bound by residues 94–97 (SHNH) and Arg-116. Residue His-95 is the Proton acceptor of the active site. Asp-117 serves as a coordination point for Mg(2+). Substrate is bound at residue Gln-240. Asp-268 serves as a coordination point for Mg(2+). 312-314 (ESQ) lines the substrate pocket. Residues Asp-493 and Gly-530 each contribute to the ATP site. Residue Asn-531 coordinates Mg(2+). Ser-533 is a substrate binding site.

Belongs to the FGAMS family. As to quaternary structure, monomer. Part of the FGAM synthase complex composed of 1 PurL, 1 PurQ and 2 PurS subunits.

The protein resides in the cytoplasm. The enzyme catalyses N(2)-formyl-N(1)-(5-phospho-beta-D-ribosyl)glycinamide + L-glutamine + ATP + H2O = 2-formamido-N(1)-(5-O-phospho-beta-D-ribosyl)acetamidine + L-glutamate + ADP + phosphate + H(+). It participates in purine metabolism; IMP biosynthesis via de novo pathway; 5-amino-1-(5-phospho-D-ribosyl)imidazole from N(2)-formyl-N(1)-(5-phospho-D-ribosyl)glycinamide: step 1/2. Functionally, part of the phosphoribosylformylglycinamidine synthase complex involved in the purines biosynthetic pathway. Catalyzes the ATP-dependent conversion of formylglycinamide ribonucleotide (FGAR) and glutamine to yield formylglycinamidine ribonucleotide (FGAM) and glutamate. The FGAM synthase complex is composed of three subunits. PurQ produces an ammonia molecule by converting glutamine to glutamate. PurL transfers the ammonia molecule to FGAR to form FGAM in an ATP-dependent manner. PurS interacts with PurQ and PurL and is thought to assist in the transfer of the ammonia molecule from PurQ to PurL. This Rhodopseudomonas palustris (strain BisB5) protein is Phosphoribosylformylglycinamidine synthase subunit PurL.